We begin with the raw amino-acid sequence, 210 residues long: Pyrrolidone-carboxylate peptidase (210 aa).

Residues glutamate 80, cysteine 143, and histidine 162 contribute to the active site.

Belongs to the peptidase C15 family. Homotetramer.

The protein resides in the cytoplasm. It catalyses the reaction Release of an N-terminal pyroglutamyl group from a polypeptide, the second amino acid generally not being Pro.. Functionally, removes 5-oxoproline from various penultimate amino acid residues except L-proline. This is Pyrrolidone-carboxylate peptidase from Chromobacterium violaceum (strain ATCC 12472 / DSM 30191 / JCM 1249 / CCUG 213 / NBRC 12614 / NCIMB 9131 / NCTC 9757 / MK).